The following is a 318-amino-acid chain: Vomeronasal type-1 receptor A11 (318 aa).

Residues 1 to 32 lie on the Extracellular side of the membrane; the sequence is MSEILFFSPQPLFSHMMNKNSRLHTHSNIKNT. The helical transmembrane segment at 33 to 53 threads the bilayer; that stretch reads FFSEIGIGISGNSFLLLFHIL. At 54 to 65 the chain is on the cytoplasmic side; that stretch reads KFIRGHRPRLTD. The chain crosses the membrane as a helical span at residues 66 to 86; it reads LPIGLLSLIHLLMLLLMAFIA. At 87–101 the chain is on the extracellular side; it reads TDIFISRRGWDGIIC. Cys-101 and Cys-188 are disulfide-bonded. The chain crosses the membrane as a helical span at residues 102–118; the sequence is KFLVYLYGVLRGLSLCT. The Cytoplasmic segment spans residues 119-147; sequence TSMLSVLQAIILSPRSSCLAKLKHKSPHH. Residues 148-168 traverse the membrane as a helical segment; the sequence is ISCAIIFLSVLYMLISSHILL. Topologically, residues 169–206 are extracellular; it reads SITATPNLTMNDFLYVSQSCSLLPLSYLVQSMYSTLLA. N-linked (GlcNAc...) asparagine glycosylation is present at Asn-175. Residues 207 to 227 traverse the membrane as a helical segment; the sequence is LREVFLISLMVLSTLYMVVLL. Over 228–254 the chain is Cytoplasmic; it reads CRHRKQAQHLQGTSLSPKASAEQRATQ. The chain crosses the membrane as a helical span at residues 255–275; it reads TILMLMTFFVLMSIFDSIVSC. Residues 276–285 are Extracellular-facing; the sequence is SRTMFLDDPT. Residues 286-306 traverse the membrane as a helical segment; sequence SYSIHIFVMHIYATVSPFVFM. Topologically, residues 307-318 are cytoplasmic; that stretch reads STEKHIVNILRG.

This sequence belongs to the G-protein coupled receptor 1 family.

It localises to the cell membrane. Its function is as follows. Putative pheromone receptor implicated in the regulation of social and reproductive behavior. The sequence is that of Vomeronasal type-1 receptor A11 from Mus musculus (Mouse).